The chain runs to 469 residues: L-seryl-tRNA(Sec) selenium transferase (469 aa).

At lysine 298 the chain carries N6-(pyridoxal phosphate)lysine.

Belongs to the SelA family. Pyridoxal 5'-phosphate is required as a cofactor.

It is found in the cytoplasm. The catalysed reaction is L-seryl-tRNA(Sec) + selenophosphate + H(+) = L-selenocysteinyl-tRNA(Sec) + phosphate. The protein operates within aminoacyl-tRNA biosynthesis; selenocysteinyl-tRNA(Sec) biosynthesis; selenocysteinyl-tRNA(Sec) from L-seryl-tRNA(Sec) (bacterial route): step 1/1. Converts seryl-tRNA(Sec) to selenocysteinyl-tRNA(Sec) required for selenoprotein biosynthesis. The sequence is that of L-seryl-tRNA(Sec) selenium transferase from Nitratidesulfovibrio vulgaris (strain ATCC 29579 / DSM 644 / CCUG 34227 / NCIMB 8303 / VKM B-1760 / Hildenborough) (Desulfovibrio vulgaris).